A 606-amino-acid chain; its full sequence is Proton myo-inositol cotransporter hmit-1.1 (606 aa).

Topologically, residues 1 to 20 (MVAVAAFSSSGQDKPAHTPK) are cytoplasmic. The helical transmembrane segment at 21–41 (LGLFVYILAAASVIGGFLFGY) threads the bilayer. Residues 42-63 (DTSVVSAAMLYMPDAPGLKPMD) lie on the Extracellular side of the membrane. Residues 64-84 (TVWQEVLVSISPGMAAVGSLM) traverse the membrane as a helical segment. Residues 85–96 (SGTSSDYIGRRK) are Cytoplasmic-facing. The chain crosses the membrane as a helical span at residues 97–117 (VILGASAIFTIGALVCAASVN). Residue K118 is a topological domain, extracellular. The chain crosses the membrane as a helical span at residues 119-139 (IMLLVGRVLLGIAIGFASMIV). Over 140–152 (PVYLGETAPTHVR) the chain is Cytoplasmic. Residues 153–173 (GMLVAAFALMISFGQVVANIT) traverse the membrane as a helical segment. Residues 174 to 188 (GGAFSYIDPYNVGWR) lie on the Extracellular side of the membrane. Residues 189 to 209 (LMFAFAAVPSIIQFVCFMFLP) form a helical membrane-spanning segment. The Cytoplasmic segment spans residues 210–278 (ETPRWLYENG…RILKTPHVLK (69 aa)). A helical transmembrane segment spans residues 279–299 (ACFIGSMLQAFQQLAGINTIL). Topologically, residues 300–317 (YYTADIIRSSGISNNHTT) are extracellular. N-linked (GlcNAc...) asparagine glycosylation occurs at N314. The helical transmembrane segment at 318–338 (IWISVLLSLCNFIGPFVPMSL) threads the bilayer. The Cytoplasmic segment spans residues 339–345 (IEKVGRR). Residues 346 to 366 (IIFLFSCGLVVLSLVFIGVAF) form a helical membrane-spanning segment. Residues 367 to 464 (LLVNHDSAAT…EKYYCDTKYT (98 aa)) are Extracellular-facing. Residues N387 and N445 are each glycosylated (N-linked (GlcNAc...) asparagine). A helical transmembrane segment spans residues 465–485 (LLPIIACGVYLLTFSSGFTSL). At 486-501 (PWVLNSEFYPMWARST) the chain is on the cytoplasmic side. The chain crosses the membrane as a helical span at residues 502-522 (CVAISTTSNWVFNLIIALTYL). The Extracellular segment spans residues 523-531 (SLTQVIGKY). A helical membrane pass occupies residues 532–552 (GAFWLYAGLTVIAFIFILFLV). The Cytoplasmic segment spans residues 553-606 (PETKGYSIEEVEMLFMNKKQRREAESRRRETVTEVRSRMNSTVSFGQHNEVHKY).

It belongs to the major facilitator superfamily. Sugar transporter (TC 2.A.1.1) family. In terms of tissue distribution, expressed in the intestine.

Its subcellular location is the cell membrane. The enzyme catalyses myo-inositol(out) + H(+)(out) = myo-inositol(in) + H(+)(in). H(+)-myo-inositol cotransporter. Probably by promoting the transport of myo-inositol regulates intracellular osmosis in response to hyperosmotic stress. This is Proton myo-inositol cotransporter hmit-1.1 from Caenorhabditis elegans.